The following is a 316-amino-acid chain: Transaldolase (316 aa).

Lys132 serves as the catalytic Schiff-base intermediate with substrate.

This sequence belongs to the transaldolase family. Type 1 subfamily. Homodimer.

The protein localises to the cytoplasm. The catalysed reaction is D-sedoheptulose 7-phosphate + D-glyceraldehyde 3-phosphate = D-erythrose 4-phosphate + beta-D-fructose 6-phosphate. It participates in carbohydrate degradation; pentose phosphate pathway; D-glyceraldehyde 3-phosphate and beta-D-fructose 6-phosphate from D-ribose 5-phosphate and D-xylulose 5-phosphate (non-oxidative stage): step 2/3. Functionally, transaldolase is important for the balance of metabolites in the pentose-phosphate pathway. The protein is Transaldolase of Aliivibrio fischeri (strain ATCC 700601 / ES114) (Vibrio fischeri).